Here is a 37-residue protein sequence, read N- to C-terminus: MSDIN-like toxin proprotein 5 (37 aa).

Residues 1–10 (MSDINATRLP) constitute a propeptide that is removed on maturation. The segment at residues 11–20 (LFFPPDFRPP) is a cross-link (cyclopeptide (Leu-Pro)). A propeptide spanning residues 21-37 (CVGDADNFTLTRGENLC) is cleaved from the precursor.

Belongs to the MSDIN fungal toxin family. In terms of processing, processed by the macrocyclase-peptidase enzyme POPB to yield a toxic cyclic decapeptide. POPB first removes 10 residues from the N-terminus. Conformational trapping of the remaining peptide forces the enzyme to release this intermediate rather than proceed to macrocyclization. The enzyme rebinds the remaining peptide in a different conformation and catalyzes macrocyclization of the N-terminal 10 residues. In terms of tissue distribution, expressed in basidiocarps.

Its function is as follows. Probable toxin that belongs to the MSDIN-like toxin family responsible for a large number of food poisoning cases and deaths. The sequence is that of MSDIN-like toxin proprotein 5 from Amanita exitialis (Guangzhou destroying angel).